Here is a 272-residue protein sequence, read N- to C-terminus: Carbonic anhydrase (272 aa).

Residues C39, H98, and C101 each coordinate Zn(2+).

Belongs to the beta-class carbonic anhydrase family. A hexamer formed by a trimer of dimers. Purified from carboxysomes with the both RuBisCO subunits and the full-length form of CcmM, probably interacts with the N-terminus of CcmM. Zn(2+) serves as cofactor.

It localises to the carboxysome. The catalysed reaction is hydrogencarbonate + H(+) = CO2 + H2O. Its function is as follows. Reversible hydration of carbon dioxide. Essential to photosynthetic carbon dioxide fixation, supplies CO(2) to RuBisCO (ribulose bisphosphate carboxylase, rbcL-rbcS) in the carboxysome. Loss of activity results in limitation of CO(2) availability to RuBisCO located in the cytoplasm. This chain is Carbonic anhydrase, found in Synechococcus elongatus (strain ATCC 33912 / PCC 7942 / FACHB-805) (Anacystis nidulans R2).